The chain runs to 647 residues: DNA mismatch repair protein MutL (647 aa).

The tract at residues 375–433 (KQEEPQAVKQPTQLWQPPKQEWQPPQSLVREEQSWQPSTKPIIEEPIQEEKSWDSNEEG) is disordered. Residues 387-400 (QLWQPPKQEWQPPQ) show a composition bias toward low complexity.

The protein belongs to the DNA mismatch repair MutL/HexB family.

In terms of biological role, this protein is involved in the repair of mismatches in DNA. It is required for dam-dependent methyl-directed DNA mismatch repair. May act as a 'molecular matchmaker', a protein that promotes the formation of a stable complex between two or more DNA-binding proteins in an ATP-dependent manner without itself being part of a final effector complex. The chain is DNA mismatch repair protein MutL from Bacillus cereus (strain AH820).